Here is a 426-residue protein sequence, read N- to C-terminus: Serine hydroxymethyltransferase (426 aa).

(6S)-5,6,7,8-tetrahydrofolate contacts are provided by residues L113 and 117 to 119 (GHL). K222 is subject to N6-(pyridoxal phosphate)lysine. Position 363 to 365 (363 to 365 (SAF)) interacts with (6S)-5,6,7,8-tetrahydrofolate.

It belongs to the SHMT family. In terms of assembly, homodimer. Pyridoxal 5'-phosphate serves as cofactor.

It is found in the cytoplasm. It catalyses the reaction (6R)-5,10-methylene-5,6,7,8-tetrahydrofolate + glycine + H2O = (6S)-5,6,7,8-tetrahydrofolate + L-serine. It functions in the pathway one-carbon metabolism; tetrahydrofolate interconversion. The protein operates within amino-acid biosynthesis; glycine biosynthesis; glycine from L-serine: step 1/1. Functionally, catalyzes the reversible interconversion of serine and glycine with tetrahydrofolate (THF) serving as the one-carbon carrier. This reaction serves as the major source of one-carbon groups required for the biosynthesis of purines, thymidylate, methionine, and other important biomolecules. Also exhibits THF-independent aldolase activity toward beta-hydroxyamino acids, producing glycine and aldehydes, via a retro-aldol mechanism. This chain is Serine hydroxymethyltransferase, found in Bacteroides fragilis (strain ATCC 25285 / DSM 2151 / CCUG 4856 / JCM 11019 / LMG 10263 / NCTC 9343 / Onslow / VPI 2553 / EN-2).